A 297-amino-acid polypeptide reads, in one-letter code: MGGVMEKFHGAYVAIITPFINGEVDEQSFVDLIEFQIANGTHGIVPCGTTGESATLSFDEHKQVMDLAIKTVAGRVPVIAGAGANNTLEAIDLSESAKESGADAILSVAPYYNKPSQEGIYQHFKAIAEAVDIPMFLYNVPGRTVVNIAPETTARLAGIDNIIGIKEACGCLEQISDVIRKCPEDFIVLSGDDFTSMPTNVIGGKGVISVISNVFPKGMAEMQEATFAGDWDRARQLHYQMYDMMKQMFAAPSPAPAKKALELMGVIREGLPRIPMTPIDDDNLANLKLAMKGLNLI.

T50 lines the pyruvate pocket. The Proton donor/acceptor role is filled by Y138. The active-site Schiff-base intermediate with substrate is the K166. I208 contacts pyruvate.

This sequence belongs to the DapA family. Homotetramer; dimer of dimers.

Its subcellular location is the cytoplasm. The catalysed reaction is L-aspartate 4-semialdehyde + pyruvate = (2S,4S)-4-hydroxy-2,3,4,5-tetrahydrodipicolinate + H2O + H(+). It functions in the pathway amino-acid biosynthesis; L-lysine biosynthesis via DAP pathway; (S)-tetrahydrodipicolinate from L-aspartate: step 3/4. Functionally, catalyzes the condensation of (S)-aspartate-beta-semialdehyde [(S)-ASA] and pyruvate to 4-hydroxy-tetrahydrodipicolinate (HTPA). The chain is 4-hydroxy-tetrahydrodipicolinate synthase from Desulfotalea psychrophila (strain LSv54 / DSM 12343).